A 329-amino-acid polypeptide reads, in one-letter code: Probable CTD kinase subunit alpha homolog (329 aa).

One can recognise a Protein kinase domain in the interval 22–297; it reads YEKIRIIGEG…VEQVVGSKYF (276 aa). ATP contacts are provided by residues 28–36 and lysine 49; that span reads IGEGTFGQV. The active-site Proton acceptor is aspartate 139.

It belongs to the protein kinase superfamily. CMGC Ser/Thr protein kinase family. CDC2/CDKX subfamily. Component of the CTDK-I complex.

The protein resides in the nucleus. Its subcellular location is the nucleolus. The catalysed reaction is [DNA-directed RNA polymerase] + ATP = phospho-[DNA-directed RNA polymerase] + ADP + H(+). Its function is as follows. Catalytic subunit of the CTDK-I complex, which hyperphosphorylates the C-terminal heptapeptide repeat domain (CTD) of the largest RNA polymerase II subunit. Involved in RNA polymerase II transcriptional elongation and pre-mRNA 3'-end processing. This Encephalitozoon cuniculi (strain GB-M1) (Microsporidian parasite) protein is Probable CTD kinase subunit alpha homolog (CTK1).